The primary structure comprises 120 residues: Small ribosomal subunit protein bS6 (120 aa).

Polar residues predominate over residues 97 to 112; sequence SNEPSPILKNQSTENT. The interval 97–120 is disordered; the sequence is SNEPSPILKNQSTENTPVIDVTAN.

Belongs to the bacterial ribosomal protein bS6 family.

In terms of biological role, binds together with bS18 to 16S ribosomal RNA. This Rickettsia bellii (strain RML369-C) protein is Small ribosomal subunit protein bS6.